The primary structure comprises 235 residues: Lipoprotein-releasing system ATP-binding protein LolD 1 (235 aa).

The ABC transporter domain maps to 5 to 234 (FEARGITKSY…DGRLQLCTPL (230 aa)). Position 42-49 (42-49 (GASGSGKT)) interacts with ATP.

This sequence belongs to the ABC transporter superfamily. Lipoprotein translocase (TC 3.A.1.125) family. In terms of assembly, the complex is composed of two ATP-binding proteins (LolD) and two transmembrane proteins (LolC and LolE).

It is found in the cell inner membrane. Functionally, part of the ABC transporter complex LolCDE involved in the translocation of mature outer membrane-directed lipoproteins, from the inner membrane to the periplasmic chaperone, LolA. Responsible for the formation of the LolA-lipoprotein complex in an ATP-dependent manner. The protein is Lipoprotein-releasing system ATP-binding protein LolD 1 of Chlorobium luteolum (strain DSM 273 / BCRC 81028 / 2530) (Pelodictyon luteolum).